The sequence spans 548 residues: MYSLIKSLATFATLFSLTLAKFESSTPPVEVVGNKFYFSNNGSQFLIRGIAYQQDAAGSVSSGYDADPNRKYNDPLADADACKRDVKYFKESNTNTLRVYAIDPDKDHEECMKIFSDAGIYIVADLSEPTVSINRNNPEWNLDLYKRYTKVIDKMQEYSNVLGFFAGNEVTNNRSNTDASAFVKAAIRDMKKYIKESDYRQIPVGYSSNDDEEIRVAIADYFSCGSLDDRADFFGINMYEWCGKSTFETSGYKDRTEEIKNLTIPAFFSEYGCNANRPRLFQEIGTLYSDKMTDVWSGGIVYMYFEEANKYGLVSVDGNSVKTLSDYNNYKSEMNKISPSLAHTSTLSSSDASKTLQCPGTAASTWKAATNLPPTPDESYCDCISKSLECVVADDVDKEDYGDLFGQVCGYIDCSAISADGSKGEYGVASFCSDKDRLSYVLNQYYLDQDKKSSACDFKGSASINSKASASGSCKAVSGVATGKASSSGGSSKSGSSSASASGSSSSSTSSGSSSSSGVKATQQMSMVKLVSIITIVTAFVGGMSVVF.

Positions Met1–Ala20 are cleaved as a signal peptide. N-linked (GlcNAc...) asparagine glycosylation occurs at Asn41. Cys82 and Cys111 are disulfide-bonded. N-linked (GlcNAc...) asparagine glycosylation is found at Asn173 and Asn261. Cystine bridges form between Cys224–Cys358, Cys242–Cys273, Cys381–Cys432, Cys390–Cys456, and Cys409–Cys414. The disordered stretch occupies residues Gly483–Gly518. A lipid anchor (GPI-anchor amidated serine) is attached at Ser517. The propeptide at Gly518 to Phe548 is removed in mature form.

The protein belongs to the glycosyl hydrolase 72 family.

The protein resides in the cell membrane. Functionally, required for apical cell growth and plays an essential role in morphogenesis. May be integral to the pathogenic ability of the organism. This is pH-responsive protein 1 (PHR1) from Candida albicans (strain SC5314 / ATCC MYA-2876) (Yeast).